The chain runs to 150 residues: Molybdopterin synthase catalytic subunit (150 aa).

Substrate-binding positions include 37–39 (KVR), 103–104 (HR), K119, and 126–128 (KRE).

Belongs to the MoaE family. As to quaternary structure, heterotetramer of 2 MoaD subunits and 2 MoaE subunits. Also stable as homodimer. The enzyme changes between these two forms during catalysis.

It catalyses the reaction 2 [molybdopterin-synthase sulfur-carrier protein]-C-terminal-Gly-aminoethanethioate + cyclic pyranopterin phosphate + H2O = molybdopterin + 2 [molybdopterin-synthase sulfur-carrier protein]-C-terminal Gly-Gly + 2 H(+). It functions in the pathway cofactor biosynthesis; molybdopterin biosynthesis. Functionally, converts molybdopterin precursor Z into molybdopterin. This requires the incorporation of two sulfur atoms into precursor Z to generate a dithiolene group. The sulfur is provided by MoaD. The protein is Molybdopterin synthase catalytic subunit (moaE) of Salmonella typhi.